A 166-amino-acid polypeptide reads, in one-letter code: Endoribonuclease YbeY (166 aa).

His-125, His-129, and His-135 together coordinate Zn(2+).

Belongs to the endoribonuclease YbeY family. The cofactor is Zn(2+).

It localises to the cytoplasm. Functionally, single strand-specific metallo-endoribonuclease involved in late-stage 70S ribosome quality control and in maturation of the 3' terminus of the 16S rRNA. This Alkalilimnicola ehrlichii (strain ATCC BAA-1101 / DSM 17681 / MLHE-1) protein is Endoribonuclease YbeY.